Here is a 164-residue protein sequence, read N- to C-terminus: Dihydrofolate reductase (164 aa).

The DHFR domain occupies asparagine 2–lysine 162. Residue isoleucine 6 to alanine 8 participates in substrate binding. Residues valine 7 to alanine 8 and isoleucine 15 to serine 20 contribute to the NADP(+) site. Aspartate 28 contributes to the substrate binding site. Glycine 44 to threonine 47 provides a ligand contact to NADP(+). A substrate-binding site is contributed by arginine 58. Residues leucine 63–glutamine 66 and isoleucine 96–leucine 101 each bind NADP(+). Residue threonine 115 coordinates substrate.

Belongs to the dihydrofolate reductase family.

It carries out the reaction (6S)-5,6,7,8-tetrahydrofolate + NADP(+) = 7,8-dihydrofolate + NADPH + H(+). Its pathway is cofactor biosynthesis; tetrahydrofolate biosynthesis; 5,6,7,8-tetrahydrofolate from 7,8-dihydrofolate: step 1/1. In terms of biological role, key enzyme in folate metabolism. Catalyzes an essential reaction for de novo glycine and purine synthesis, and for DNA precursor synthesis. The sequence is that of Dihydrofolate reductase (folA) from Buchnera aphidicola subsp. Baizongia pistaciae (strain Bp).